We begin with the raw amino-acid sequence, 294 residues long: uncharacterized protein (294 aa).

3 disordered regions span residues 1–30 (MKRQ…EVSH), 51–86 (ALSD…KKRP), and 250–294 (DELN…STST). 3 stretches are compositionally biased toward polar residues: residues 7–26 (QDSM…TPTK), 66–81 (PYSS…NSST), and 255–277 (PMNN…NLPT).

The protein localises to the nucleus. This is an uncharacterized protein from Schizosaccharomyces pombe (strain 972 / ATCC 24843) (Fission yeast).